A 439-amino-acid polypeptide reads, in one-letter code: uncharacterized protein (439 aa).

The signal sequence occupies residues 1–19; sequence MKKLLLTASIICLASAGLA.

This is an uncharacterized protein from Rickettsia felis (strain ATCC VR-1525 / URRWXCal2) (Rickettsia azadi).